An 89-amino-acid polypeptide reads, in one-letter code: Small ribosomal subunit protein uS15 (89 aa).

It belongs to the universal ribosomal protein uS15 family. As to quaternary structure, part of the 30S ribosomal subunit. Forms a bridge to the 50S subunit in the 70S ribosome, contacting the 23S rRNA.

Its function is as follows. One of the primary rRNA binding proteins, it binds directly to 16S rRNA where it helps nucleate assembly of the platform of the 30S subunit by binding and bridging several RNA helices of the 16S rRNA. Functionally, forms an intersubunit bridge (bridge B4) with the 23S rRNA of the 50S subunit in the ribosome. The sequence is that of Small ribosomal subunit protein uS15 from Chlorobium phaeobacteroides (strain BS1).